The following is a 542-amino-acid chain: Membrane protein insertase YidC (542 aa).

A helical transmembrane segment spans residues 6-26 (NILLIGLLFVSFLLWQQWQAD). Positions 32–41 (VAQTQSSVAP) are enriched in polar residues. Positions 32–57 (VAQTQSSVAPSTVADAHSSDVPDADS) are disordered. The next 5 membrane-spanning stretches (helical) occupy residues 326 to 346 (LVVD…LLMF), 350 to 370 (FVGN…GMLY), 421 to 441 (GGCL…WVLL), 458 to 478 (LSVQ…MFIM), and 501 to 521 (VIFT…WLVG).

This sequence belongs to the OXA1/ALB3/YidC family. Type 1 subfamily. Interacts with the Sec translocase complex via SecD. Specifically interacts with transmembrane segments of nascent integral membrane proteins during membrane integration.

The protein resides in the cell inner membrane. Its function is as follows. Required for the insertion and/or proper folding and/or complex formation of integral membrane proteins into the membrane. Involved in integration of membrane proteins that insert both dependently and independently of the Sec translocase complex, as well as at least some lipoproteins. Aids folding of multispanning membrane proteins. The polypeptide is Membrane protein insertase YidC (Shewanella piezotolerans (strain WP3 / JCM 13877)).